Consider the following 207-residue polypeptide: Thymidylate kinase (207 aa).

7–14 (GCEGTGKT) lines the ATP pocket.

Belongs to the thymidylate kinase family.

It carries out the reaction dTMP + ATP = dTDP + ADP. Functionally, phosphorylation of dTMP to form dTDP in both de novo and salvage pathways of dTTP synthesis. This chain is Thymidylate kinase, found in Onion yellows phytoplasma (strain OY-M).